Consider the following 253-residue polypeptide: 1-(5-phosphoribosyl)-5-[(5-phosphoribosylamino)methylideneamino] imidazole-4-carboxamide isomerase (253 aa).

Catalysis depends on aspartate 19, which acts as the Proton acceptor. The active-site Proton donor is aspartate 141.

The protein belongs to the HisA/HisF family.

It localises to the cytoplasm. The enzyme catalyses 1-(5-phospho-beta-D-ribosyl)-5-[(5-phospho-beta-D-ribosylamino)methylideneamino]imidazole-4-carboxamide = 5-[(5-phospho-1-deoxy-D-ribulos-1-ylimino)methylamino]-1-(5-phospho-beta-D-ribosyl)imidazole-4-carboxamide. The protein operates within amino-acid biosynthesis; L-histidine biosynthesis; L-histidine from 5-phospho-alpha-D-ribose 1-diphosphate: step 4/9. The polypeptide is 1-(5-phosphoribosyl)-5-[(5-phosphoribosylamino)methylideneamino] imidazole-4-carboxamide isomerase (Rhodopirellula baltica (strain DSM 10527 / NCIMB 13988 / SH1)).